Consider the following 328-residue polypeptide: Organic solute transporter alpha-like protein (328 aa).

The Extracellular portion of the chain corresponds to 1-44; it reads MNASENYFTMDPTENISQVLDQNRNNTNSLRTHPTVEEYYENMT. Asparagine 2, asparagine 15, asparagine 25, and asparagine 42 each carry an N-linked (GlcNAc...) asparagine glycan. Residues 45-65 traverse the membrane as a helical segment; the sequence is AFLSLAIFIASLLTILNISIF. Topologically, residues 66 to 84 are cytoplasmic; that stretch reads ATTVSRLRRHLDKPLLGPS. The helical transmembrane segment at 85–105 threads the bilayer; sequence IMMVGLYPIISVAALVTILVP. Residue tyrosine 106 is a topological domain, extracellular. A helical transmembrane segment spans residues 107 to 127; sequence SWFICHTVMHVMFMVGGPVFR. The Cytoplasmic portion of the chain corresponds to 128-177; it reads TLLFRYVGSEQNYVKETAGEAVQLNTPPCCCCCLCLPMVIPTKAKLCISR. The chain crosses the membrane as a helical span at residues 178–198; that stretch reads YMVWQMPFWQGSIMLVMNILY. Residues 199-208 are Extracellular-facing; it reads YRDIQLYRQV. Residues 209 to 229 traverse the membrane as a helical segment; sequence MFFFIPFIVCSIVLGAWSLQI. Topologically, residues 230–247 are cytoplasmic; it reads TVRMITKVRGDYQLRKKM. A helical transmembrane segment spans residues 248 to 265; sequence FCLQLVVMLCKLQYLVLY. At 266 to 287 the chain is on the extracellular side; that stretch reads DQLDGIKMGGEYPINHTVYKQT. Asparagine 280 carries an N-linked (GlcNAc...) asparagine glycan. A helical membrane pass occupies residues 288 to 308; it reads IINILILVEMVLVSMMVQSAY. Topologically, residues 309–328 are cytoplasmic; that stretch reads RTPVQVQIDEVNKEKEVTRI.

The protein belongs to the OST-alpha family.

Its subcellular location is the cell membrane. Probable transporter. This Drosophila melanogaster (Fruit fly) protein is Organic solute transporter alpha-like protein.